We begin with the raw amino-acid sequence, 145 residues long: D-aminoacyl-tRNA deacylase (145 aa).

Positions 137 to 138 match the Gly-cisPro motif, important for rejection of L-amino acids motif; sequence GP.

Belongs to the DTD family. In terms of assembly, homodimer.

It localises to the cytoplasm. The enzyme catalyses glycyl-tRNA(Ala) + H2O = tRNA(Ala) + glycine + H(+). It catalyses the reaction a D-aminoacyl-tRNA + H2O = a tRNA + a D-alpha-amino acid + H(+). In terms of biological role, an aminoacyl-tRNA editing enzyme that deacylates mischarged D-aminoacyl-tRNAs. Also deacylates mischarged glycyl-tRNA(Ala), protecting cells against glycine mischarging by AlaRS. Acts via tRNA-based rather than protein-based catalysis; rejects L-amino acids rather than detecting D-amino acids in the active site. By recycling D-aminoacyl-tRNA to D-amino acids and free tRNA molecules, this enzyme counteracts the toxicity associated with the formation of D-aminoacyl-tRNA entities in vivo and helps enforce protein L-homochirality. The polypeptide is D-aminoacyl-tRNA deacylase (Dinoroseobacter shibae (strain DSM 16493 / NCIMB 14021 / DFL 12)).